The following is a 739-amino-acid chain: Polyphosphate kinase (739 aa).

Residues 22–45 (WHSDNSALAAPPAATTSASQDQLP) form a disordered region. A compositionally biased stretch (low complexity) spans 27-40 (SALAAPPAATTSAS). An ATP-binding site is contributed by Asn-87. Positions 428 and 458 each coordinate Mg(2+). His-488 (phosphohistidine intermediate) is an active-site residue. Residues Tyr-521, Arg-621, and His-649 each coordinate ATP. The interval 714–739 (QWTASPQKGQQVRDHQESLMERHRSR) is disordered. A compositionally biased stretch (basic and acidic residues) spans 724–739 (QVRDHQESLMERHRSR).

Belongs to the polyphosphate kinase 1 (PPK1) family. Mg(2+) serves as cofactor. Post-translationally, an intermediate of this reaction is the autophosphorylated ppk in which a phosphate is covalently linked to a histidine residue through a N-P bond.

The enzyme catalyses [phosphate](n) + ATP = [phosphate](n+1) + ADP. Its function is as follows. Catalyzes the reversible transfer of the terminal phosphate of ATP to form a long-chain polyphosphate (polyP). In Mycobacterium leprae (strain TN), this protein is Polyphosphate kinase.